A 704-amino-acid chain; its full sequence is 1,4-alpha-glucan-branching enzyme (704 aa).

Trp-94 and Lys-131 together coordinate (1,4-alpha-D-glucosyl)n. Ser-190 is modified (phosphoserine). Asp-356 serves as the catalytic Nucleophile. The active-site Proton donor is Glu-417.

The protein belongs to the glycosyl hydrolase 13 family. GlgB subfamily.

Its subcellular location is the cytoplasm. The enzyme catalyses Transfers a segment of a (1-&gt;4)-alpha-D-glucan chain to a primary hydroxy group in a similar glucan chain.. It functions in the pathway glycan biosynthesis; glycogen biosynthesis. Glycogen-branching enzyme participates in the glycogen biosynthetic process along with glycogenin and glycogen synthase. Generates alpha-1,6-glucosidic branches from alpha-1,4-linked glucose chains, to increase solubility of the glycogen polymer. This is 1,4-alpha-glucan-branching enzyme (GLC3) from Saccharomyces cerevisiae (strain ATCC 204508 / S288c) (Baker's yeast).